Consider the following 241-residue polypeptide: MRSGVIAQKVGMTRVFTDAGEHVPVTVLKIDQCQVVAHRTVEKNGYVALQVGVGKAKVKNVSAAERGRFAVAKVEPKKKLAEFRVTEDALIPVGAEITADHFIPGQFVDVTGTTTGKGFAGGIKRWNFGGLRATHGVSISHRSIGSTGGRQDPGKTFKNKKMPGHLGVERVTTQNLRVVRTDPERGLILVEGAVPGVAGGWIQIRDAVKRKLPADVPLPGKFRENGASAPATEAPAAEETA.

Disordered stretches follow at residues 140–162 (SHRS…NKKM) and 217–241 (PLPG…EETA). An N5-methylglutamine modification is found at Gln151. Residues 229 to 241 (APATEAPAAEETA) are compositionally biased toward low complexity.

Belongs to the universal ribosomal protein uL3 family. Part of the 50S ribosomal subunit. Forms a cluster with proteins L14 and L19. Post-translationally, methylated by PrmB.

Its function is as follows. One of the primary rRNA binding proteins, it binds directly near the 3'-end of the 23S rRNA, where it nucleates assembly of the 50S subunit. This Methylobacterium radiotolerans (strain ATCC 27329 / DSM 1819 / JCM 2831 / NBRC 15690 / NCIMB 10815 / 0-1) protein is Large ribosomal subunit protein uL3.